A 214-amino-acid polypeptide reads, in one-letter code: Large ribosomal subunit protein uL29m (214 aa).

It belongs to the universal ribosomal protein uL29 family. As to quaternary structure, component of the mitochondrial large ribosomal subunit. Mature mitochondrial ribosomes consist of a small (37S) and a large (54S) subunit. The 37S subunit contains at least 33 different proteins and 1 molecule of RNA (15S). The 54S subunit contains at least 45 different proteins and 1 molecule of RNA (21S).

It is found in the mitochondrion. In Aspergillus terreus (strain NIH 2624 / FGSC A1156), this protein is Large ribosomal subunit protein uL29m (mrpl4).